We begin with the raw amino-acid sequence, 234 residues long: Leucyl/phenylalanyl-tRNA--protein transferase (234 aa).

Belongs to the L/F-transferase family.

It localises to the cytoplasm. It carries out the reaction N-terminal L-lysyl-[protein] + L-leucyl-tRNA(Leu) = N-terminal L-leucyl-L-lysyl-[protein] + tRNA(Leu) + H(+). The enzyme catalyses N-terminal L-arginyl-[protein] + L-leucyl-tRNA(Leu) = N-terminal L-leucyl-L-arginyl-[protein] + tRNA(Leu) + H(+). It catalyses the reaction L-phenylalanyl-tRNA(Phe) + an N-terminal L-alpha-aminoacyl-[protein] = an N-terminal L-phenylalanyl-L-alpha-aminoacyl-[protein] + tRNA(Phe). Its function is as follows. Functions in the N-end rule pathway of protein degradation where it conjugates Leu, Phe and, less efficiently, Met from aminoacyl-tRNAs to the N-termini of proteins containing an N-terminal arginine or lysine. The protein is Leucyl/phenylalanyl-tRNA--protein transferase of Shigella sonnei (strain Ss046).